The chain runs to 177 residues: ATP synthase subunit delta (177 aa).

The protein belongs to the ATPase delta chain family. F-type ATPases have 2 components, F(1) - the catalytic core - and F(0) - the membrane proton channel. F(1) has five subunits: alpha(3), beta(3), gamma(1), delta(1), epsilon(1). F(0) has three main subunits: a(1), b(2) and c(10-14). The alpha and beta chains form an alternating ring which encloses part of the gamma chain. F(1) is attached to F(0) by a central stalk formed by the gamma and epsilon chains, while a peripheral stalk is formed by the delta and b chains.

Its subcellular location is the cell inner membrane. In terms of biological role, f(1)F(0) ATP synthase produces ATP from ADP in the presence of a proton or sodium gradient. F-type ATPases consist of two structural domains, F(1) containing the extramembraneous catalytic core and F(0) containing the membrane proton channel, linked together by a central stalk and a peripheral stalk. During catalysis, ATP synthesis in the catalytic domain of F(1) is coupled via a rotary mechanism of the central stalk subunits to proton translocation. This protein is part of the stalk that links CF(0) to CF(1). It either transmits conformational changes from CF(0) to CF(1) or is implicated in proton conduction. The sequence is that of ATP synthase subunit delta from Shewanella oneidensis (strain ATCC 700550 / JCM 31522 / CIP 106686 / LMG 19005 / NCIMB 14063 / MR-1).